The following is a 132-amino-acid chain: Glycine cleavage system H protein (132 aa).

The Lipoyl-binding domain maps to 24–107; it reads TATIGLSAFA…GEEGWLIKVR (84 aa). Lys65 carries the N6-lipoyllysine modification.

The protein belongs to the GcvH family. As to quaternary structure, the glycine cleavage system is composed of four proteins: P, T, L and H. It depends on (R)-lipoate as a cofactor.

The glycine cleavage system catalyzes the degradation of glycine. The H protein shuttles the methylamine group of glycine from the P protein to the T protein. The polypeptide is Glycine cleavage system H protein (Synechocystis sp. (strain ATCC 27184 / PCC 6803 / Kazusa)).